Consider the following 476-residue polypeptide: Serine/threonine-protein kinase PknF (476 aa).

Phosphothreonine; by autocatalysis occurs at positions 8 and 13. The 268-residue stretch at 12 to 279 folds into the Protein kinase domain; sequence FTIVRQLGSG…FARALGHRLG (268 aa). Residues 18–26 and Lys-41 contribute to the ATP site; that span reads LGSGGMGEV. Asp-137 (proton acceptor) is an active-site residue. A phosphothreonine; by autocatalysis mark is found at Thr-173, Thr-175, and Thr-287. Ser-290 is modified (phosphoserine; by autocatalysis). A disordered region spans residues 332–376; it reads ADDERAAQPARTRTTTSAGTTTSVAPASTTRPAPTTPTTTGAADT. The span at 338-376 shows a compositional bias: low complexity; sequence AQPARTRTTTSAGTTTSVAPASTTRPAPTTPTTTGAADT.

The protein belongs to the protein kinase superfamily. Ser/Thr protein kinase family. In terms of processing, dephosphorylated by PstP.

The enzyme catalyses L-seryl-[protein] + ATP = O-phospho-L-seryl-[protein] + ADP + H(+). The catalysed reaction is L-threonyl-[protein] + ATP = O-phospho-L-threonyl-[protein] + ADP + H(+). The sequence is that of Serine/threonine-protein kinase PknF (pknF) from Mycobacterium bovis (strain ATCC BAA-935 / AF2122/97).